The sequence spans 404 residues: Imidazolonepropionase (404 aa).

Fe(3+)-binding residues include H73 and H75. Positions 73 and 75 each coordinate Zn(2+). Residues R82, Y145, and H178 each contribute to the 4-imidazolone-5-propanoate site. Y145 serves as a coordination point for N-formimidoyl-L-glutamate. A Fe(3+)-binding site is contributed by H243. A Zn(2+)-binding site is contributed by H243. Q246 is a binding site for 4-imidazolone-5-propanoate. D318 is a binding site for Fe(3+). D318 contacts Zn(2+). 2 residues coordinate N-formimidoyl-L-glutamate: N320 and G322. S323 is a 4-imidazolone-5-propanoate binding site.

The protein belongs to the metallo-dependent hydrolases superfamily. HutI family. Zn(2+) is required as a cofactor. Requires Fe(3+) as cofactor.

Its subcellular location is the cytoplasm. It carries out the reaction 4-imidazolone-5-propanoate + H2O = N-formimidoyl-L-glutamate. The protein operates within amino-acid degradation; L-histidine degradation into L-glutamate; N-formimidoyl-L-glutamate from L-histidine: step 3/3. Functionally, catalyzes the hydrolytic cleavage of the carbon-nitrogen bond in imidazolone-5-propanoate to yield N-formimidoyl-L-glutamate. It is the third step in the universal histidine degradation pathway. The polypeptide is Imidazolonepropionase (Bradyrhizobium sp. (strain BTAi1 / ATCC BAA-1182)).